The sequence spans 134 residues: uncharacterized protein (134 aa).

An N-terminal signal peptide occupies residues 1-26 (MRLYKAMALCLPLVVICTSEVSQSTA). Residues 77-98 (GEKNEEVAGPVDGEGSEEEAFD) form a disordered region.

This is an uncharacterized protein from Encephalitozoon cuniculi (strain GB-M1) (Microsporidian parasite).